Here is a 560-residue protein sequence, read N- to C-terminus: Nucleoprotein (560 aa).

A binding site for the cap structure m7GTP region spans residues 54–236; that stretch reads LRKAKRSDAD…ITRDESAVNI (183 aa). Polar residues predominate over residues 323–332; that stretch reads GRSWDNTSVD. The interval 323–349 is disordered; that stretch reads GRSWDNTSVDLNPKPDPGPRAPEKNGQ. Residues Asp380 and Glu382 each coordinate Mn(2+). Residues Glu390, Cys497, His500, and Cys521 each coordinate Zn(2+). Mn(2+) is bound at residue Asp525.

The protein belongs to the arenaviridae nucleocapsid protein family. As to quaternary structure, homomultimerizes to form the nucleocapsid. Binds to viral genomic RNA. Interacts with glycoprotein G2. Interacts with protein Z; this interaction probably directs the encapsidated genome to budding sites. Interacts with protein L; this interaction does not interfere with Z-L interaction. Interacts with host IKBKE (via Protein kinase domain); the interaction inhibits IKBKE kinase activity.

Its subcellular location is the virion. The protein localises to the host cytoplasm. In terms of biological role, encapsidates the genome, protecting it from nucleases. The encapsidated genomic RNA is termed the nucleocapsid (NC). Serves as template for viral transcription and replication. The increased presence of protein N in host cell does not seem to trigger the switch from transcription to replication as observed in other negative strain RNA viruses. Through the interaction with host IKBKE, strongly inhibits the phosphorylation and nuclear translocation of host IRF3, a protein involved in interferon activation pathway, leading to the inhibition of interferon-beta and IRF3-dependent promoters activation. Also encodes a functional 3'-5' exoribonuclease that degrades preferentially dsRNA substrates and thereby participates in the suppression of interferon induction. This is Nucleoprotein from Cupixi mammarenavirus (isolate Rat/Brasil/BeAn 119303/1970) (CPXV).